A 427-amino-acid chain; its full sequence is UDP-N-acetylglucosamine--N-acetylmuramyl-(pentapeptide) pyrophosphoryl-undecaprenol N-acetylglucosamine transferase (427 aa).

UDP-N-acetyl-alpha-D-glucosamine contacts are provided by residues 29 to 31 (TGG), Asn-141, Arg-177, Ser-205, Ile-258, and Gln-303. Residues 408-427 (SLHPIPDSRFPIRTSAGGAQ) are disordered.

Belongs to the glycosyltransferase 28 family. MurG subfamily.

The protein resides in the cell inner membrane. It catalyses the reaction di-trans,octa-cis-undecaprenyl diphospho-N-acetyl-alpha-D-muramoyl-L-alanyl-D-glutamyl-meso-2,6-diaminopimeloyl-D-alanyl-D-alanine + UDP-N-acetyl-alpha-D-glucosamine = di-trans,octa-cis-undecaprenyl diphospho-[N-acetyl-alpha-D-glucosaminyl-(1-&gt;4)]-N-acetyl-alpha-D-muramoyl-L-alanyl-D-glutamyl-meso-2,6-diaminopimeloyl-D-alanyl-D-alanine + UDP + H(+). The protein operates within cell wall biogenesis; peptidoglycan biosynthesis. Functionally, cell wall formation. Catalyzes the transfer of a GlcNAc subunit on undecaprenyl-pyrophosphoryl-MurNAc-pentapeptide (lipid intermediate I) to form undecaprenyl-pyrophosphoryl-MurNAc-(pentapeptide)GlcNAc (lipid intermediate II). This Xanthomonas campestris pv. campestris (strain B100) protein is UDP-N-acetylglucosamine--N-acetylmuramyl-(pentapeptide) pyrophosphoryl-undecaprenol N-acetylglucosamine transferase.